Reading from the N-terminus, the 507-residue chain is Aromatase (507 aa).

C436 is a binding site for heme.

The protein belongs to the cytochrome P450 family. The cofactor is heme.

The protein localises to the membrane. It catalyses the reaction testosterone + 3 reduced [NADPH--hemoprotein reductase] + 3 O2 = 17beta-estradiol + formate + 3 oxidized [NADPH--hemoprotein reductase] + 4 H2O + 4 H(+). The enzyme catalyses androst-4-ene-3,17-dione + 3 reduced [NADPH--hemoprotein reductase] + 3 O2 = estrone + formate + 3 oxidized [NADPH--hemoprotein reductase] + 4 H2O + 4 H(+). Its function is as follows. Catalyzes the formation of aromatic C18 estrogens from C19 androgens. This Gallus gallus (Chicken) protein is Aromatase (CYP19A1).